The primary structure comprises 712 residues: Ribosomal RNA large subunit methyltransferase K/L (712 aa).

Positions 43–154 (TAYRCCLWTR…GEKGVLGLDM (112 aa)) constitute a THUMP domain.

Belongs to the methyltransferase superfamily. RlmKL family.

The protein resides in the cytoplasm. The catalysed reaction is guanosine(2445) in 23S rRNA + S-adenosyl-L-methionine = N(2)-methylguanosine(2445) in 23S rRNA + S-adenosyl-L-homocysteine + H(+). The enzyme catalyses guanosine(2069) in 23S rRNA + S-adenosyl-L-methionine = N(2)-methylguanosine(2069) in 23S rRNA + S-adenosyl-L-homocysteine + H(+). In terms of biological role, specifically methylates the guanine in position 2445 (m2G2445) and the guanine in position 2069 (m7G2069) of 23S rRNA. This is Ribosomal RNA large subunit methyltransferase K/L from Photobacterium profundum (strain SS9).